Reading from the N-terminus, the 613-residue chain is MVAVEFKVSESGRPRPEKNPKLGFFVYLLGSAAIIGGFLFGYDTSVVSAAMLYVPEAPGLKPMGTVWKEVIVSITPGMAAVGAWFSGAGSDRYGRKPIIIGSTLIFVCGAVICAVAWTKIVMLIGRIFLGVGIGFASMVVPVYLGEASPTHVRGTLVSAFAMMISFGQVVANIMGGVFSYWEPYTIGWRLMFAFAGIPALIQFVCFIFLPETPRWLYENGHTEQAEQVLEKIYGGNTEWIEYELAEIKTYAEERQKQMEEEKKSGPVIWRILKTPHVLKACFIGSMLQAFQQLAGINTILYYTADIIRSAGIENYHTIIWISVILSICNLIGPFAPMFFIEKLGRRKLFLFSCAGVVVSLVLIGVSFLLVGNDSAPNFDRSAYLLAGNYQSNGEAESCLMLSNCDSCVTSEHCGFCEDSETRTGFCLPVDHNDVTLYSSTGLCTNGLDKSNSSFPNATSYVWQKHHCTTSYTILPIVMMGVYLLTFSCGFTSLPWVLNSEFYPMWARSTCVSISTLSNWVFNLIIALTYLSLTHAITKYGAFWLYAIFTIIAFIFIYFLVPETTGYSIDEVEMLFMNKRQRNIAMQARQAKLDAASDKDKNSSTSLSTETITM.

At 1–21 (MVAVEFKVSESGRPRPEKNPK) the chain is on the cytoplasmic side. The helical transmembrane segment at 22–42 (LGFFVYLLGSAAIIGGFLFGY) threads the bilayer. Residues 43–69 (DTSVVSAAMLYVPEAPGLKPMGTVWKE) lie on the Extracellular side of the membrane. A helical membrane pass occupies residues 70-90 (VIVSITPGMAAVGAWFSGAGS). Residues 91-96 (DRYGRK) are Cytoplasmic-facing. Residues 97-117 (PIIIGSTLIFVCGAVICAVAW) traverse the membrane as a helical segment. Residues 118–119 (TK) are Extracellular-facing. Residues 120 to 140 (IVMLIGRIFLGVGIGFASMVV) form a helical membrane-spanning segment. Over 141–157 (PVYLGEASPTHVRGTLV) the chain is Cytoplasmic. The chain crosses the membrane as a helical span at residues 158–178 (SAFAMMISFGQVVANIMGGVF). Residues 179 to 189 (SYWEPYTIGWR) lie on the Extracellular side of the membrane. Residues 190-210 (LMFAFAGIPALIQFVCFIFLP) form a helical membrane-spanning segment. Over 211 to 279 (ETPRWLYENG…RILKTPHVLK (69 aa)) the chain is Cytoplasmic. A helical transmembrane segment spans residues 280-300 (ACFIGSMLQAFQQLAGINTIL). At 301–317 (YYTADIIRSAGIENYHT) the chain is on the extracellular side. A helical transmembrane segment spans residues 318–338 (IIWISVILSICNLIGPFAPMF). Residues 339-347 (FIEKLGRRK) are Cytoplasmic-facing. The chain crosses the membrane as a helical span at residues 348 to 368 (LFLFSCAGVVVSLVLIGVSFL). The Extracellular segment spans residues 369 to 472 (LVGNDSAPNF…QKHHCTTSYT (104 aa)). N-linked (GlcNAc...) asparagine glycans are attached at residues Asn372, Asn451, and Asn456. Residues 473-493 (ILPIVMMGVYLLTFSCGFTSL) traverse the membrane as a helical segment. The Cytoplasmic segment spans residues 494 to 515 (PWVLNSEFYPMWARSTCVSIST). The helical transmembrane segment at 516–536 (LSNWVFNLIIALTYLSLTHAI) threads the bilayer. Topologically, residues 537 to 539 (TKY) are extracellular. Residues 540–560 (GAFWLYAIFTIIAFIFIYFLV) form a helical membrane-spanning segment. The Cytoplasmic segment spans residues 561-613 (PETTGYSIDEVEMLFMNKRQRNIAMQARQAKLDAASDKDKNSSTSLSTETITM). Residues 594–613 (AASDKDKNSSTSLSTETITM) form a disordered region. Over residues 602 to 613 (SSTSLSTETITM) the composition is skewed to polar residues.

The protein belongs to the major facilitator superfamily. Sugar transporter (TC 2.A.1.1) family. As to expression, expressed in the excretory canal cell and in pairs of amphid and sheath glia.

It localises to the cell membrane. It is found in the perikaryon. It catalyses the reaction myo-inositol(out) + H(+)(out) = myo-inositol(in) + H(+)(in). H(+)-myo-inositol cotransporter. Probably by promoting the transport of myo-inositol regulates intracellular osmosis in response to hyperosmotic stress. This is Proton myo-inositol cotransporter hmit-1.2 from Caenorhabditis elegans.